A 401-amino-acid chain; its full sequence is tRNA (guanine-N(7)-)-methyltransferase non-catalytic subunit wuho (401 aa).

The interval 45 to 85 (KGRPRKYFDADSDSDEEQQNGDEPGTGKNNGGGDTGKKDQD) is disordered. The segment covering 54–64 (ADSDSDEEQQN) has biased composition (acidic residues). WD repeat units follow at residues 86–125 (DQTNAIVALDVNEDRSLVAVATGDKSLYLFEVDQDGRTLK), 174–213 (GHMSQVLDVLIDTEEKLIITSDRDEKIRVTCHPDCHNIET), and 217–255 (GHTEFVSHLEFLGPELLLSLSGDKTLRWWNYTSGKELAR).

It belongs to the WD repeat TRM82 family. As to quaternary structure, forms a heterodimer with the catalytic subunit.

It localises to the nucleus. It functions in the pathway tRNA modification; N(7)-methylguanine-tRNA biosynthesis. Functionally, required for the formation of N(7)-methylguanine at position 46 (m7G46) in tRNA. In the complex, it is required to stabilize and induce conformational changes of the catalytic subunit. This Culex quinquefasciatus (Southern house mosquito) protein is tRNA (guanine-N(7)-)-methyltransferase non-catalytic subunit wuho.